Consider the following 111-residue polypeptide: Fertilization-influencing membrane protein (111 aa).

The signal sequence occupies residues 1–23; that stretch reads MKLWLWVAVGVWMLMAELGTIET. The helical transmembrane segment at 85 to 105 threads the bilayer; that stretch reads ILVGTLVVAFFFLLFQFCLHV.

Testis-specific.

The protein localises to the cell membrane. The protein resides in the secreted. Functionally, plays a role in sperm-oocyte fusion process during fertilization. This Mus musculus (Mouse) protein is Fertilization-influencing membrane protein.